The sequence spans 81 residues: Sulfur carrier protein TusA (81 aa).

The active-site Cysteine persulfide intermediate is Cys-19.

The protein belongs to the sulfur carrier protein TusA family. As to quaternary structure, interacts with IscS.

Its subcellular location is the cytoplasm. Its pathway is tRNA modification. In terms of biological role, sulfur carrier protein involved in sulfur trafficking in the cell. Part of a sulfur-relay system required for 2-thiolation during synthesis of 2-thiouridine of the modified wobble base 5-methylaminomethyl-2-thiouridine (mnm(5)s(2)U) in tRNA. Interacts with IscS and stimulates its cysteine desulfurase activity. Accepts an activated sulfur from IscS, which is then transferred to TusD, and thus determines the direction of sulfur flow from IscS to 2-thiouridine formation. Also appears to be involved in sulfur transfer for the biosynthesis of molybdopterin. The sequence is that of Sulfur carrier protein TusA from Enterobacter sp. (strain 638).